Consider the following 617-residue polypeptide: Chaperone protein DnaK (617 aa).

Position 175 is a phosphothreonine; by autocatalysis (threonine 175). The segment covering 578-592 (AGAEAQQGAQGTQGA) has biased composition (low complexity). A disordered region spans residues 578–617 (AGAEAQQGAQGTQGADMGGNAQGKDDDNVVDADFKVEDDK). Residues 600–617 (GKDDDNVVDADFKVEDDK) are compositionally biased toward basic and acidic residues.

This sequence belongs to the heat shock protein 70 family.

Acts as a chaperone. The chain is Chaperone protein DnaK from Clostridium novyi (strain NT).